A 1091-amino-acid polypeptide reads, in one-letter code: Voltage-dependent calcium channel subunit alpha-2/delta-3 (1091 aa).

The first 28 residues, 1-28 (MAGPGSPRRASRGASALLAAALLYAALG), serve as a signal peptide directing secretion. The Extracellular segment spans residues 29 to 1068 (DVVRSEQQIP…HPEENARECG (1040 aa)). N166 carries N-linked (GlcNAc...) asparagine glycosylation. Residues 256–438 (DVVILVDVSG…ENVMEYLHVL (183 aa)) form the VWFA domain. Residues D262, S264, and S266 each coordinate a divalent metal cation. The MIDAS-like motif motif lies at 262–266 (DVSGS). A glycan (N-linked (GlcNAc...) asparagine) is linked at N309. A disulfide bridge connects residues C412 and C1055. Positions 452–549 (WTEAYIDSTL…RLLYEEGKKR (98 aa)) constitute a Cache domain. N-linked (GlcNAc...) asparagine glycans are attached at residues N553, N632, and N793. Residue Y924 is modified to Phosphotyrosine. Residues 1069–1089 (GAPSLQAQTVLLLLPLLLMLF) form a helical membrane-spanning segment. The Cytoplasmic segment spans residues 1090–1091 (SR).

It belongs to the calcium channel subunit alpha-2/delta family. In terms of assembly, dimer formed of alpha-2-2 and delta-2 chains; disulfide-linked. Voltage-dependent calcium channels are multisubunit complexes, consisting of alpha-1 (CACNA1), alpha-2 (CACNA2D), beta (CACNB) and delta (CACNA2D) subunits in a 1:1:1:1 ratio. N-glycosylated. Post-translationally, may be proteolytically processed into subunits alpha-2-3 and delta-3 that are disulfide-linked. It is however unclear whether such cleavage really takes place in vivo and has a functional role. In terms of tissue distribution, only detected in brain. Not present in lung, testis, aorta, spleen, jejunum, ventricular muscle and kidney (at protein level). According to PubMed:11687876, it is brain-specific, while according to PubMed:11245980, it is widely expressed.

The protein localises to the membrane. Its function is as follows. The alpha-2/delta subunit of voltage-dependent calcium channels regulates calcium current density and activation/inactivation kinetics of the calcium channel. Acts as a regulatory subunit for P/Q-type calcium channel (CACNA1A), N-type (CACNA1B), L-type (CACNA1C OR CACNA1D) but not T-type (CACNA1G). In Homo sapiens (Human), this protein is Voltage-dependent calcium channel subunit alpha-2/delta-3 (CACNA2D3).